Consider the following 51-residue polypeptide: Large ribosomal subunit protein eL39 (51 aa).

Belongs to the eukaryotic ribosomal protein eL39 family. In terms of assembly, part of the 50S ribosomal subunit.

The sequence is that of Large ribosomal subunit protein eL39 from Thermococcus kodakarensis (strain ATCC BAA-918 / JCM 12380 / KOD1) (Pyrococcus kodakaraensis (strain KOD1)).